A 225-amino-acid chain; its full sequence is 2-C-methyl-D-erythritol 4-phosphate cytidylyltransferase (225 aa).

It belongs to the IspD/TarI cytidylyltransferase family. IspD subfamily.

The enzyme catalyses 2-C-methyl-D-erythritol 4-phosphate + CTP + H(+) = 4-CDP-2-C-methyl-D-erythritol + diphosphate. It functions in the pathway isoprenoid biosynthesis; isopentenyl diphosphate biosynthesis via DXP pathway; isopentenyl diphosphate from 1-deoxy-D-xylulose 5-phosphate: step 2/6. Functionally, catalyzes the formation of 4-diphosphocytidyl-2-C-methyl-D-erythritol from CTP and 2-C-methyl-D-erythritol 4-phosphate (MEP). In Haemophilus influenzae (strain PittEE), this protein is 2-C-methyl-D-erythritol 4-phosphate cytidylyltransferase.